The sequence spans 422 residues: Osteomodulin (422 aa).

Residues 1 to 20 form the signal peptide; the sequence is MGFSSLVCVLFFFLGVKVYC. Residues 21 to 27 constitute a propeptide that is removed on maturation; sequence QYESYQW. Sulfotyrosine occurs at positions 22, 25, 31, 39, 51, and 77. Positions 53–91 constitute an LRRNT domain; sequence APFHQHTLGCASECFCPPNFPSSMYCDNRKLKTIPNIPA. LRR repeat units follow at residues 92–113, 116–129, 142–164, 165–184, 187–207, 213–233, 234–255, 258–280, 281–294, 301–322, and 331–353; these read HIQQ…SFIN, HLKE…KIKS, NLLQ…PKSL, ERIF…AVNG, NLTM…QEKV, KLMQ…GLPS, SLMY…YFNK, KLHA…FNLS, NLIE…KLKQ, NLEH…VMCP, and HLTH…IFLC. 2 N-linked (GlcNAc...) asparagine glycosylation sites follow: Asn113 and Asn121. An N-linked (GlcNAc...) asparagine glycan is attached at Asn187. Asn242 and Asn278 each carry an N-linked (GlcNAc...) asparagine glycan. Asn316 carries an N-linked (GlcNAc...) asparagine glycan. A disulfide bridge connects residues Cys321 and Cys353. Residues 385–422 are disordered; the sequence is DDGDSEDHDDHHEGPEEEGTEENIDAHYYGSQEWQETI. Residues Tyr412 and Tyr413 each carry the sulfotyrosine modification.

This sequence belongs to the small leucine-rich proteoglycan (SLRP) family. SLRP class II subfamily. As to quaternary structure, binds the alpha(V)beta(3)-integrin. In terms of processing, the N-terminus is blocked. Glycosylated; contains keratan sulfate. Post-translationally, sulfated on tyrosine residue(s). In terms of tissue distribution, bone specific (at protein level).

The protein localises to the secreted. Its subcellular location is the extracellular space. The protein resides in the extracellular matrix. In terms of biological role, may be implicated in biomineralization processes. Has a function in binding of osteoblasts via the alpha(V)beta(3)-integrin. This Bos taurus (Bovine) protein is Osteomodulin (OMD).